Reading from the N-terminus, the 385-residue chain is Homoserine O-succinyltransferase (385 aa).

The AB hydrolase-1 domain maps to 45 to 355 (NAVLVCHALN…SHGHDAFLLD (311 aa)). The Nucleophile role is filled by Ser-151. Position 221 (Arg-221) interacts with substrate. Catalysis depends on residues Asp-316 and His-349. Asp-350 contributes to the substrate binding site.

This sequence belongs to the AB hydrolase superfamily. MetX family. As to quaternary structure, homodimer.

The protein localises to the cytoplasm. The catalysed reaction is L-homoserine + succinyl-CoA = O-succinyl-L-homoserine + CoA. The protein operates within amino-acid biosynthesis; L-methionine biosynthesis via de novo pathway; O-succinyl-L-homoserine from L-homoserine: step 1/1. In terms of biological role, transfers a succinyl group from succinyl-CoA to L-homoserine, forming succinyl-L-homoserine. The chain is Homoserine O-succinyltransferase from Herminiimonas arsenicoxydans.